Reading from the N-terminus, the 412-residue chain is Intraflagellar transport protein che-13 (412 aa).

Disordered regions lie at residues 1-21 (MEEE…GSAI) and 162-193 (PPKE…NFLD). Acidic residues predominate over residues 165-193 (EEDEDTAVDEQDEDDDNDDIVEEPMNFLD). Positions 302–393 (QLASMMSKFR…VQIGVFEQSI (92 aa)) form a coiled coil.

It belongs to the IFT57 family. As to quaternary structure, component of the IFT complex B composed of at least che-2, che-13, dyf-1, dyf-3, dyf-6, dyf-11, dyf-13, ift-20, ift-74, ift-81, ifta-2, osm-1, osm-5 and osm-6.

It localises to the cytoplasm. The protein resides in the cytoskeleton. The protein localises to the cilium axoneme. Component of the intraflagellar transport (IFT) complex B required for transport of proteins in the motile cilium. May be required for ciliary entrance and transport of specific ciliary cargo proteins such as che-3 which are related to motility. Required for the formation of chemosensory cilia that detect chemosensory cues. This is Intraflagellar transport protein che-13 from Caenorhabditis elegans.